The sequence spans 859 residues: Magnesium transporter ALR1 (859 aa).

The span at 1–20 (MSSSSSSSESSPNLSRSNSL) shows a compositional bias: low complexity. Disordered regions lie at residues 1 to 281 (MSSS…MPPQ) and 330 to 399 (TSST…NIPS). At Ser2 the chain carries N-acetylserine. Composition is skewed to basic and acidic residues over residues 28–42 (KTED…RQHP) and 55–73 (KNKE…EQKS). Residue Tyr77 is modified to Phosphotyrosine. Residue Ser85 is modified to Phosphoserine. The segment covering 144 to 154 (PPKDVGVKRDY) has biased composition (basic and acidic residues). The span at 157-176 (SSSTASSGNKSKLSASSSAS) shows a compositional bias: low complexity. A phosphoserine mark is found at Ser185 and Ser188. Residues 193-203 (IPHESKSDTHS) are compositionally biased toward basic and acidic residues. Residues 213-235 (YSTTSAHSSINPAVLLTKSTSQK) are compositionally biased toward polar residues. A phosphoserine mark is found at Ser220, Ser221, and Ser236. A Phosphothreonine modification is found at Thr242. Positions 252–265 (TRASFDSDVSQASR) are enriched in polar residues. A compositionally biased stretch (low complexity) spans 330–339 (TSSTSTSGSS). The span at 353 to 375 (EKSESTNETEIHEKKEDEHEKIK) shows a compositional bias: basic and acidic residues. The next 2 membrane-spanning stretches (helical) occupy residues 744-764 (TMIG…GMNV) and 773-793 (IAWW…GWFL). The interval 830–859 (FNDRSKNINVRAGPSNKSVASLPSRYSRYD) is disordered. Position 850 is a phosphoserine (Ser850).

This sequence belongs to the CorA metal ion transporter (MIT) (TC 1.A.35) family.

It is found in the cell membrane. Functionally, plasma membrane magnesium transporter. The sequence is that of Magnesium transporter ALR1 (ALR1) from Saccharomyces cerevisiae (strain ATCC 204508 / S288c) (Baker's yeast).